A 276-amino-acid polypeptide reads, in one-letter code: ARL14 effector protein (276 aa).

Positions 159-183 (QTEFAPESGKREKRKLTKNASASSD) are disordered. Residue Lys176 forms a Glycyl lysine isopeptide (Lys-Gly) (interchain with G-Cter in SUMO2) linkage. 2 positions are modified to phosphoserine: Ser182 and Ser266.

Interacts with ARL14 and MYO1E.

The protein localises to the cytoplasm. In terms of biological role, through its interaction with ARL14 and MYO1E, may connect MHC class II-containing cytoplasmic vesicles to the actin network and hence controls the movement of these vesicles along the actin cytoskeleton in dendritic cells. The sequence is that of ARL14 effector protein (Arl14ep) from Rattus norvegicus (Rat).